The primary structure comprises 319 residues: N-acetyl-D-glucosamine kinase (319 aa).

Residue threonine 14 coordinates ATP. 2 residues coordinate substrate: asparagine 37 and aspartate 113. An ATP-binding site is contributed by threonine 135. Residues 153 to 155 and aspartate 160 contribute to the substrate site; that span reads GWG. An ATP-binding site is contributed by alanine 220.

The protein belongs to the eukaryotic-type N-acetylglucosamine kinase family. As to quaternary structure, homodimer.

The enzyme catalyses N-acetyl-D-glucosamine + ATP = N-acetyl-D-glucosamine 6-phosphate + ADP + H(+). Converts N-acetylglucosamine (GlcNAc), a major component of complex carbohydrates, into GlcNAc 6-phosphate. Also has ManNAc kinase activity. The protein is N-acetyl-D-glucosamine kinase (nagk) of Dictyostelium discoideum (Social amoeba).